The chain runs to 1887 residues: ATP-dependent DNA helicase tlh1 (1887 aa).

The span at 329–347 (NQQRREQQDKGENKKRQDD) shows a compositional bias: basic and acidic residues. 3 disordered regions span residues 329-372 (NQQR…EEEE), 504-552 (ERKE…NTDD), and 1110-1135 (MVEG…EMTQ). Acidic residues-rich tracts occupy residues 360 to 372 (LEDD…EEEE) and 524 to 533 (SAEDDNDNDN). Over residues 540-549 (NNNNNNNNTN) the composition is skewed to low complexity. The segment covering 1112-1131 (EGDKEKDKTNEEKNKDEVKA) has biased composition (basic and acidic residues). One can recognise a Helicase ATP-binding domain in the interval 1200 to 1375 (YFSLLNRMNL…RQTFCTNFYV (176 aa)). Residues 1213-1220 (LPTGGGKS) and 1240-1247 (MNMVTLVL) each bind ATP. The DEAH box signature appears at 1322-1325 (DEAH). Positions 1401–1559 (DLRTLMKRTK…CVRSFLASEM (159 aa)) constitute a Helicase C-terminal domain. The interval 1613 to 1643 (YNASFSSSPPPQPGNSSGMSAMNTNTTSTTP) is disordered. Over residues 1626–1642 (GNSSGMSAMNTNTTSTT) the composition is skewed to low complexity. A CCHC-type zinc finger spans residues 1804-1821 (STCYKCGKADHNLRECKL).

It belongs to the helicase family. RecQ subfamily.

The enzyme catalyses Couples ATP hydrolysis with the unwinding of duplex DNA by translocating in the 3'-5' direction.. It catalyses the reaction ATP + H2O = ADP + phosphate + H(+). Its function is as follows. A probable ATP-dependent 3'-5' DNA helicase. Has a role in telomerase-independent telomere maintenance. The protein is ATP-dependent DNA helicase tlh1 of Schizosaccharomyces pombe (strain 972 / ATCC 24843) (Fission yeast).